Consider the following 474-residue polypeptide: Receptor-transporting protein 3 (474 aa).

Topologically, residues 1-453 (MMEEDIGDTE…SCCEAACNCM (453 aa)) are cytoplasmic. A 3CxxC-type zinc finger spans residues 53–164 (TFARFHCPSC…SSNCEACLLG (112 aa)). The interval 175–304 (SKPPAPPLSP…ISCTSKPSTT (130 aa)) is disordered. Composition is skewed to polar residues over residues 197 to 228 (VTCSNISSSRPSSKVQMPQASKVNPQASNPTK) and 259 to 304 (VTCS…PSTT). A helical membrane pass occupies residues 454–474 (SQSPLCCLAFLILFLLLWYLL).

This sequence belongs to the TMEM7 family. As to quaternary structure, interacts with TAS2R16. As to expression, expressed predominantly in the liver. Not detected in the olfactory epithelium.

The protein localises to the membrane. Functionally, promotes functional cell surface expression of the bitter taste receptors TAS2R16 and TAS2R43. This is Receptor-transporting protein 3 (Rtp3) from Mus musculus (Mouse).